A 577-amino-acid chain; its full sequence is Cryptochrome DASH, chloroplastic/mitochondrial (577 aa).

A chloroplast and mitochondrion-targeting transit peptide spans 1–53 (MIKQPFLLTKFTPFSSKSKHTLFTFHCNFSIKMASLTARTTPTVQNVPGLTPE). Residues 78–219 (GVAIVWFRND…GNDPGSGNTT (142 aa)) form the Photolyase/cryptochrome alpha/beta domain. Residues 550-577 (TKKTGDSKTAFSSRRGRPEDNRRKRHGY) are disordered.

This sequence belongs to the DNA photolyase class-1 family. FAD serves as cofactor. The cofactor is (6R)-5,10-methylene-5,6,7,8-tetrahydrofolate. In terms of tissue distribution, expressed in the endosperm and embryo 96 hours after seed imbibition. In the embryo, detected in the root meristem, the root cap, the shoot apical meristem and the epidermis of cotyledons. In adult plants, detcted in roots, the whole leaf lamina, the stem and in glandular trichomes.

The protein resides in the plastid. The protein localises to the chloroplast. It localises to the mitochondrion. Functionally, may have a photoreceptor function and might bind ss- and ds-DNA in a sequence non-specific manner. Lacks photolyase activity. Has a potential role in detecting the dawn and dusk transitions and, consequently, in circadian input pathways. The polypeptide is Cryptochrome DASH, chloroplastic/mitochondrial (Solanum lycopersicum (Tomato)).